The following is a 333-amino-acid chain: MDVEKLNLDNIISRLLEVRGSKPGKNVQLTESEIKGLCQKSREIFLSQPILLELEAPLKICGDVHGQYYDLLRLFEYGGFPPESNYLFLGDYVDRGKQSLETICLLLAYKIKYPENFFLLRGNHECASINRIYGFYDECKRRYNIKLWKTFTDCFNCLPVAAIIDEKIFCCHGGLSPDLQSMEQIRRIMRPTDVPDQGLLCDLLWSDPDKDVTGWGENDRGVSFTFGPEVVAKFLHKHDLDLICRAHQVVEDGYEFFAKRQLVTLFSAPNYCGEFDNAGSMMTVDETLMCSFQILKPADKKKYPYGAGGVGSNRPVTPPRNAPAAQPKKGAKK.

Asp-63, His-65, Asp-91, and Asn-123 together coordinate Mn(2+). The active-site Proton donor is the His-124. Residues His-172 and His-247 each contribute to the Mn(2+) site. The segment at 306–333 (GAGGVGSNRPVTPPRNAPAAQPKKGAKK) is disordered. The span at 322–333 (APAAQPKKGAKK) shows a compositional bias: low complexity.

It belongs to the PPP phosphatase family. PP-1 subfamily. As to quaternary structure, interacts with lab-1; the interaction is direct. Interacts with knl-1; the interaction is direct. Mn(2+) serves as cofactor. As to expression, expressed in gonads, nervous system, intestine and muscles.

It is found in the cytoplasm. The protein localises to the nucleus. The catalysed reaction is O-phospho-L-seryl-[protein] + H2O = L-seryl-[protein] + phosphate. It catalyses the reaction O-phospho-L-threonyl-[protein] + H2O = L-threonyl-[protein] + phosphate. Inhibited by okadaic acid. Its function is as follows. Serine/threonine-protein phosphatase essential for chromosomal dynamics during meiosis and mitosis. During meiosis, promotes chromosomal cohesion and germline immortality via a small RNA-mediated genome silencing pathway. Antagonizes the function of air-2 kinase during meiosis I and mitosis to promote chromatid cohesion and spindle attachment. Dephosphorylates histone H3 at 'Ser-10'. Dephosphorylates histone H3 at 'Thr-3'. Also involved in the activation of chloride channel clh-3 during cell swelling and meiotic maturation. Promotes small RNA-mediated genome silencing over multiple generations. Essential for embryogenesis. The sequence is that of Serine/threonine-protein phosphatase PP1-beta from Caenorhabditis elegans.